The sequence spans 22 residues: Mu-conotoxin SxIIIC (22 aa).

Intrachain disulfides connect cysteine 3-cysteine 15, cysteine 4-cysteine 21, and cysteine 10-cysteine 22. A Cysteine amide modification is found at cysteine 22.

It belongs to the conotoxin M superfamily. As to expression, expressed by the venom duct.

The protein resides in the secreted. Its function is as follows. Mu-conotoxins block voltage-gated sodium channels (Nav). This toxin potently inhibits hNav1.4/SCN4A (IC(50)=15.11 nM). It also displays lower activities on other human subtypes (Nav1.1/SCN1A; IC(50)=132 nM, Nav1.2/SCN2A; IC(50)=363.8, Nav1.3/SCN3A; IC(50)=89.4, Nav1.6/SCN3A; IC(50)=124.9, Nav1.7/SCN7A; IC(50)=152.2). At Nav1.7/SCN9A, it does not elicit change in channel voltage-dependence of fast inactivation or activation, suggesting it acts as a pore blocker. Interestingly, it blocks current inhibition in an irreversible manner (tested during 35 minutes). The protein is Mu-conotoxin SxIIIC of Conus striolatus (Cone snail).